Reading from the N-terminus, the 912-residue chain is Translation initiation factor IF-2 (912 aa).

A disordered region spans residues 185–204 (NATRPKRKTKEEKQKEREER). Residues 193–204 (TKEEKQKEREER) are compositionally biased toward basic and acidic residues. Positions 411–581 (LRPPIVTIMG…LLEAELLDLK (171 aa)) constitute a tr-type G domain. A G1 region spans residues 420–427 (GHVDHGKT). GTP is bound at residue 420 to 427 (GHVDHGKT). The interval 445 to 449 (GITQH) is G2. The tract at residues 467–470 (DTPG) is G3. Residues 467–471 (DTPGH) and 521–524 (NKID) each bind GTP. A G4 region spans residues 521-524 (NKID). The tract at residues 557–559 (SAK) is G5.

This sequence belongs to the TRAFAC class translation factor GTPase superfamily. Classic translation factor GTPase family. IF-2 subfamily.

The protein localises to the cytoplasm. One of the essential components for the initiation of protein synthesis. Protects formylmethionyl-tRNA from spontaneous hydrolysis and promotes its binding to the 30S ribosomal subunits. Also involved in the hydrolysis of GTP during the formation of the 70S ribosomal complex. This chain is Translation initiation factor IF-2, found in Azobacteroides pseudotrichonymphae genomovar. CFP2.